A 1004-amino-acid polypeptide reads, in one-letter code: Ephrin type-B receptor 2 (1004 aa).

A signal peptide spans 1-19 (MGPLWFCCLPLALLPLLAA). Topologically, residues 20–544 (VEETLMDSTT…QTSVQEKLPL (525 aa)) are extracellular. An Eph LBD domain is found at 21-203 (EETLMDSTTA…FYRKCPRVIQ (183 aa)). 2 disulfide bridges follow: C63–C185 and C98–C108. N266, N337, N429, N478, and N483 each carry an N-linked (GlcNAc...) asparagine glycan. Fibronectin type-III domains follow at residues 325–435 (IPSA…TNQA) and 436–531 (APSA…TMTE). Residues 545-565 (IIGSSAAGLVFLIAVVVIIIV) traverse the membrane as a helical segment. Over 566–1004 (CNRRRGFERA…QMNQIQSVEV (439 aa)) the chain is Cytoplasmic. The Protein kinase domain maps to 639-902 (VKIEQVIGAG…QIVNTLDKMI (264 aa)). ATP-binding positions include 645-653 (IGAGEFGEV) and K671. Catalysis depends on D764, which acts as the Proton acceptor. In terms of domain architecture, SAM spans 931–995 (TSFNTVDEWL…LNSIQVMRAQ (65 aa)). Positions 1002–1004 (VEV) match the PDZ-binding motif.

The protein belongs to the protein kinase superfamily. Tyr protein kinase family. Ephrin receptor subfamily. In terms of assembly, heterotetramer upon binding of the ligand. The heterotetramer is composed of an ephrin dimer and a receptor dimer. Oligomerization is probably required to induce biological responses. Post-translationally, ligand binding induces cleavage by matrix metalloproteinases (MMPs) such as MMP7/MMP9, producing an EphB2/N-terminal fragment (NTF) and a C-terminal long fragment (EphB2-LF). EphB2-LF is further cleaved by MMPs, producing EphB2/CTF1 which is further cleaved by the PS1/gamma-secretase producing EphB2/CTF2. In terms of tissue distribution, wide tissue distribution throughout development and sustained expression in adult brain. The longer form (CEK5+) is specifically expressed in the central nervous system.

It localises to the cell membrane. The protein localises to the cell projection. Its subcellular location is the axon. It is found in the dendrite. The enzyme catalyses L-tyrosyl-[protein] + ATP = O-phospho-L-tyrosyl-[protein] + ADP + H(+). Functionally, receptor tyrosine kinase which binds promiscuously transmembrane ephrin-B family ligands residing on adjacent cells, leading to contact-dependent bidirectional signaling into neighboring cells. The signaling pathway downstream of the receptor is referred to as forward signaling while the signaling pathway downstream of the ephrin ligand is referred to as reverse signaling. Functions in axon guidance during development. In addition to axon guidance, also regulates dendritic spines development and maturation and stimulates the formation of excitatory synapses. This Gallus gallus (Chicken) protein is Ephrin type-B receptor 2 (EPHB2).